A 346-amino-acid polypeptide reads, in one-letter code: Ribosomal RNA small subunit methyltransferase H (346 aa).

S-adenosyl-L-methionine contacts are provided by residues 47–49 (GGY), Asp-65, Phe-92, Asp-113, and Gln-120. Residues 294-346 (AVEPGSDEVAGNPRARSAKLRAAERTDAPAHPDGDLAGLLPADLSQRRGRRRS) are disordered. Residues 314-327 (RAAERTDAPAHPDG) are compositionally biased toward basic and acidic residues. Low complexity predominate over residues 328–337 (DLAGLLPADL).

The protein belongs to the methyltransferase superfamily. RsmH family.

The protein localises to the cytoplasm. The catalysed reaction is cytidine(1402) in 16S rRNA + S-adenosyl-L-methionine = N(4)-methylcytidine(1402) in 16S rRNA + S-adenosyl-L-homocysteine + H(+). Functionally, specifically methylates the N4 position of cytidine in position 1402 (C1402) of 16S rRNA. This chain is Ribosomal RNA small subunit methyltransferase H, found in Azorhizobium caulinodans (strain ATCC 43989 / DSM 5975 / JCM 20966 / LMG 6465 / NBRC 14845 / NCIMB 13405 / ORS 571).